The primary structure comprises 1181 residues: HEAT repeat-containing protein 6 (1181 aa).

One copy of the HEAT 1 repeat lies at 159–198; it reads LELLGETGLLMKLSDLAQSDPEVRRAAVHCMANLCLSVPG. Disordered regions lie at residues 294 to 347 and 371 to 407; these read DGRT…PVTG and LDGSGAAGKDGVSSPFSSSSWKRVSSSESDFSDAEGG. Residues 300-312 are compositionally biased toward polar residues; that stretch reads KPQQSESSASRPT. The segment covering 313-325 has biased composition (basic residues); sequence LNKKKKSKVKPKK. 4 positions are modified to phosphoserine: S336, S337, S399, and S402. The segment covering 383–399 has biased composition (low complexity); that stretch reads SSPFSSSSWKRVSSSES. HEAT repeat units follow at residues 452–490, 514–552, and 558–595; these read ELGSPQSVSLMTLTLKDPSPKTRACALQVLSAILEGSKQ, SSIRELHRCLLLALVAESSSQTLTQIIKCLANLVSDAPY, and SLLTKVWNQIKPYIRHKDVNVRVSSLTLLGAIVSTHAP. Positions 613–648 are disordered; sequence NSNSATPHLSPPDWWKKAPAGPSLEETSVSSPKGSS. Residue T618 is modified to Phosphothreonine. Over residues 637–646 the composition is skewed to polar residues; it reads EETSVSSPKG. Position 643 is a phosphoserine (S643).

The sequence is that of HEAT repeat-containing protein 6 (HEATR6) from Pongo abelii (Sumatran orangutan).